Reading from the N-terminus, the 94-residue chain is Translation initiation factor IF-1 (94 aa).

Positions 1–72 constitute an S1-like domain; the sequence is MAKEELIQFE…EKGRLIFRHK (72 aa). Residues 71–94 form a disordered region; that stretch reads HKDERPGGTGAPRGAPPRGQFRRR. Positions 82-94 are enriched in low complexity; the sequence is PRGAPPRGQFRRR.

Belongs to the IF-1 family. As to quaternary structure, component of the 30S ribosomal translation pre-initiation complex which assembles on the 30S ribosome in the order IF-2 and IF-3, IF-1 and N-formylmethionyl-tRNA(fMet); mRNA recruitment can occur at any time during PIC assembly.

The protein localises to the cytoplasm. Its function is as follows. One of the essential components for the initiation of protein synthesis. Stabilizes the binding of IF-2 and IF-3 on the 30S subunit to which N-formylmethionyl-tRNA(fMet) subsequently binds. Helps modulate mRNA selection, yielding the 30S pre-initiation complex (PIC). Upon addition of the 50S ribosomal subunit IF-1, IF-2 and IF-3 are released leaving the mature 70S translation initiation complex. The protein is Translation initiation factor IF-1 of Rhodopseudomonas palustris (strain BisB5).